Reading from the N-terminus, the 561-residue chain is BTB/POZ domain-containing protein At2g46260 (561 aa).

Disordered stretches follow at residues 1 to 31 (MRGS…EGDF) and 100 to 119 (LTDN…NLDD). A compositionally biased stretch (polar residues) spans 17–28 (DSNFSRHGSSSE). The span at 107 to 119 (DMDDAPGGDNLDD) shows a compositional bias: acidic residues. In terms of domain architecture, BTB spans 143–212 (IDCSTVVRVK…MYSNSLSVTT (70 aa)). Positions 266 to 358 (QPLTDAAKQF…YMTCRKLKKV (93 aa)) constitute a BACK domain.

It functions in the pathway protein modification; protein ubiquitination. Functionally, may act as a substrate-specific adapter of an E3 ubiquitin-protein ligase complex (CUL3-RBX1-BTB) which mediates the ubiquitination and subsequent proteasomal degradation of target proteins. In Arabidopsis thaliana (Mouse-ear cress), this protein is BTB/POZ domain-containing protein At2g46260.